We begin with the raw amino-acid sequence, 443 residues long: Acyl transferase 10 (443 aa).

Catalysis depends on proton acceptor residues histidine 182 and aspartate 386.

It belongs to the plant acyltransferase family.

Involved in the incorporation of ferulate into the cell wall. May act as arabinoxylan feruloyl transferase. May function as p-coumaroyl-CoA transferase involved in glucuronoarabinoxylan modification. In Oryza sativa subsp. japonica (Rice), this protein is Acyl transferase 10.